Reading from the N-terminus, the 253-residue chain is Indole-3-glycerol phosphate synthase (253 aa).

It belongs to the TrpC family.

The enzyme catalyses 1-(2-carboxyphenylamino)-1-deoxy-D-ribulose 5-phosphate + H(+) = (1S,2R)-1-C-(indol-3-yl)glycerol 3-phosphate + CO2 + H2O. It functions in the pathway amino-acid biosynthesis; L-tryptophan biosynthesis; L-tryptophan from chorismate: step 4/5. This Bacillus cereus (strain G9842) protein is Indole-3-glycerol phosphate synthase.